Reading from the N-terminus, the 699-residue chain is tRNA 5-methylaminomethyl-2-thiouridine biosynthesis bifunctional protein MnmC (699 aa).

The tract at residues 1–247 is tRNA (mnm(5)s(2)U34)-methyltransferase; that stretch reads MPAVSRPLPP…KREMLCGEIA (247 aa). Residues 275 to 699 form an FAD-dependent cmnm(5)s(2)U34 oxidoreductase region; that stretch reads IGAGLAGTSV…QPSPTTTETP (425 aa). The tract at residues 675–699 is disordered; sequence RGNATLSTSSPNDDAQPSPTTTETP.

This sequence in the N-terminal section; belongs to the methyltransferase superfamily. tRNA (mnm(5)s(2)U34)-methyltransferase family. The protein in the C-terminal section; belongs to the DAO family. Requires FAD as cofactor.

The protein localises to the cytoplasm. It catalyses the reaction 5-aminomethyl-2-thiouridine(34) in tRNA + S-adenosyl-L-methionine = 5-methylaminomethyl-2-thiouridine(34) in tRNA + S-adenosyl-L-homocysteine + H(+). In terms of biological role, catalyzes the last two steps in the biosynthesis of 5-methylaminomethyl-2-thiouridine (mnm(5)s(2)U) at the wobble position (U34) in tRNA. Catalyzes the FAD-dependent demodification of cmnm(5)s(2)U34 to nm(5)s(2)U34, followed by the transfer of a methyl group from S-adenosyl-L-methionine to nm(5)s(2)U34, to form mnm(5)s(2)U34. The protein is tRNA 5-methylaminomethyl-2-thiouridine biosynthesis bifunctional protein MnmC of Chromohalobacter salexigens (strain ATCC BAA-138 / DSM 3043 / CIP 106854 / NCIMB 13768 / 1H11).